Here is a 441-residue protein sequence, read N- to C-terminus: DILAAFRVTPQPGVPPEEAGAAVAPESSTGTWTTVWTDGLTSLDRYKGRCYHIEPVAGEENQYIAYVAYPLDLFEEGSVTNMFTSIVGNVFGFKALRALRLEDLRIPPAYSKTFQGPPHGIQVERDKLNKYGRPLLGCTIKPKLGLSAKNYGRAVYECLRGGLDFTKDDENVNSQPFMRWRDRFLFCAEAIYKAQAETGEIKGHYLNATAGTCEEMIKRAVFARELGVPIVMHDYLTGGFTANTSLAHYCRDNGLLLHIHRAMHAVIDRQKNRGMHFRVLAKALRMSGGDHIHAGTVVGKLEGERDITLGFVDLLRDDFLEKDRSRGIYFTQDWVSLPGVLPVASGGIHVWHMPALTEIFGDDSVLQFGGGTLGHPWGNAPGAVANRVALEACVQARNEGRDLAREGNEIIREASKWSPELAAACEVWKEIKFEFEAMDTL.

Positions 89 and 139 each coordinate substrate. Lys-141 acts as the Proton acceptor in catalysis. Substrate is bound at residue Lys-143. Mg(2+)-binding residues include Lys-167, Asp-169, and Glu-170. Residue Lys-167 is modified to N6-carboxylysine. The Proton acceptor role is filled by His-260. Substrate-binding residues include Arg-261, His-293, and Ser-345.

The protein belongs to the RuBisCO large chain family. Type I subfamily. In terms of assembly, heterohexadecamer of 8 large chains and 8 small chains; disulfide-linked. The disulfide link is formed within the large subunit homodimers. Mg(2+) serves as cofactor. The disulfide bond which can form in the large chain dimeric partners within the hexadecamer appears to be associated with oxidative stress and protein turnover.

It is found in the plastid. It localises to the chloroplast. The catalysed reaction is 2 (2R)-3-phosphoglycerate + 2 H(+) = D-ribulose 1,5-bisphosphate + CO2 + H2O. It carries out the reaction D-ribulose 1,5-bisphosphate + O2 = 2-phosphoglycolate + (2R)-3-phosphoglycerate + 2 H(+). RuBisCO catalyzes two reactions: the carboxylation of D-ribulose 1,5-bisphosphate, the primary event in carbon dioxide fixation, as well as the oxidative fragmentation of the pentose substrate in the photorespiration process. Both reactions occur simultaneously and in competition at the same active site. This is Ribulose bisphosphate carboxylase large chain from Fouquieria splendens (Ocotillo).